The following is a 362-amino-acid chain: MGNTFGHLFRITTFGESHGGGVGVVIDGCPPLLEISPEEIQLELDRRRPGQSKITTPRKEADTCEILSGVYEGKTLGTPISILVRNKDTRPQDYDEMAQKYRPSHADATYDAKYGIRNWQGGGRSSARETIGRVAAGAIAKKILRQVANVEVIGYVKRIKDLEGVVDPNTVTLDQVESNIVRCPDGELADRMIELIEQTGRQGDSIGGVVECVARNVPKGLGEPVFDKLEADIAKAVMSLPASKGFEIGSGFAGTLLTGFEHNDEYYIDENGEIRTVTNRSGGIQGGIANGENIILRVAFKPTATIRKEQKTVTREGEETLLAAKGRHDPCVLPRAVPMVEAMVALVLCDHLLRHHGQCKVL.

Position 47 (Arg47) interacts with NADP(+). Residues 124–126, Gly286, 301–305, and Arg327 contribute to the FMN site; these read RSS and KPTAT.

The protein belongs to the chorismate synthase family. In terms of assembly, homotetramer. FMNH2 is required as a cofactor.

It carries out the reaction 5-O-(1-carboxyvinyl)-3-phosphoshikimate = chorismate + phosphate. It functions in the pathway metabolic intermediate biosynthesis; chorismate biosynthesis; chorismate from D-erythrose 4-phosphate and phosphoenolpyruvate: step 7/7. Catalyzes the anti-1,4-elimination of the C-3 phosphate and the C-6 proR hydrogen from 5-enolpyruvylshikimate-3-phosphate (EPSP) to yield chorismate, which is the branch point compound that serves as the starting substrate for the three terminal pathways of aromatic amino acid biosynthesis. This reaction introduces a second double bond into the aromatic ring system. This is Chorismate synthase from Trichormus variabilis (strain ATCC 29413 / PCC 7937) (Anabaena variabilis).